The primary structure comprises 248 residues: 14-3-3-like protein G-BOX factor 14 lambda (248 aa).

Residues serine 70, serine 112, and serine 193 each carry the phosphoserine; by CRPK1 modification. Threonine 214 carries the phosphothreonine; by CRPK1 modification.

Belongs to the 14-3-3 family. As to quaternary structure, interacts with SERK1 in the cell membrane. Component of the SERK1 signaling complex, composed of KAPP, CDC48A, GRF6 or GRF7, SERK1, SERK2, SERK3/BAK1 and BRI1. Interacts with TPK1. Interacts with ADF1. Binds to CRPK1 at the plasma membrane. Interacts with DREB1A and DREB1B in the nucleus when activated by CRPK1-mediated phosphorylation upon freezing. Interacts with CINV1. Binds to the N-terminal region of B1L. Transphosphorylated by SERK1. Post-translationally, phosphorylated by CRPK1 in response to cold.

It localises to the nucleus. Its subcellular location is the cell membrane. The protein localises to the cytoplasm. Functionally, is associated with a DNA binding complex that binds to the G box, a well-characterized cis-acting DNA regulatory element found in plant genes. Specific negative regulator of slow-vacuolar (SV) ion channel. Mediates F-actin dynamics possibly through inhibiting ADF1 phosphorylation. Negative regulator of freezing tolerance that modulates cold-responsive C-repeat-binding factors (CBF) DREB1A and DREB1B proteins stability by facilitating their ubiquitin-mediated degradation when activated by CRPK1-mediated phosphorylation in freezing conditions; this processus is counteracted by B1L. This Arabidopsis thaliana (Mouse-ear cress) protein is 14-3-3-like protein G-BOX factor 14 lambda.